The sequence spans 474 residues: Cell division protein FtsP (474 aa).

The segment at residues 1 to 27 (MSLSRRQFIQAAGLALGAGSLPLRAQA) is a signal peptide (tat-type signal). The region spanning 229–288 (WVRLRLLNASNARRYTLQLSDGRPLYVVASDQGFLPAPVAVQQLSLAPGERREVVIDMSQ) is the Plastocyanin-like domain.

Belongs to the FtsP family. Predicted to be exported by the Tat system. The position of the signal peptide cleavage has not been experimentally proven.

The protein resides in the periplasm. Functionally, cell division protein that is required for growth during stress conditions. May be involved in protecting or stabilizing the divisomal assembly under conditions of stress. The protein is Cell division protein FtsP of Yersinia pestis.